Consider the following 509-residue polypeptide: Carboxysome shell carbonic anhydrase (509 aa).

Cysteine 170 provides a ligand contact to Zn(2+). The active-site Proton acceptor is aspartate 172. The Zn(2+) site is built by histidine 238 and cysteine 249.

The protein belongs to the beta-class carbonic anhydrase family. CsoSCA subfamily. Homodimer. Zn(2+) serves as cofactor.

The protein localises to the carboxysome. The catalysed reaction is hydrogencarbonate + H(+) = CO2 + H2O. Functionally, reversible hydration of carbon dioxide. Essential for photosynthetic carbon dioxide fixation, supplies CO(2) to RuBisCO (ribulose bisphosphate carboxylase, cbbL-cbbS) in the carboxysome. There are estimated to be 29 CsoSCA oligomers per carboxysome. In Prochlorococcus marinus subsp. pastoris (strain CCMP1986 / NIES-2087 / MED4), this protein is Carboxysome shell carbonic anhydrase.